A 653-amino-acid chain; its full sequence is Large subunit GTPase 1 homolog (653 aa).

Residues 1-47 (MGKKRGTGLGRSLQRQRGSERRGASSWLHASEVVGESGPERRSAVEQ) form a disordered region. One can recognise a CP-type G domain in the interval 155-439 (WRQLWRVIER…LCDCPGLVMP (285 aa)). 203 to 206 (NKAD) serves as a coordination point for GTP. Residues 248–275 (ADSVADDLSDSEEESSSQEEDVTAEDSA) show a composition bias toward acidic residues. Positions 248–323 (ADSVADDLSD…TCSEDEGGDK (76 aa)) are disordered. Residues 276 to 291 (ESTSTGSALQTENQCL) are compositionally biased toward polar residues. A compositionally biased stretch (acidic residues) spans 293-320 (SDDDSSDEYEDCEDEEEDDWQTCSEDEG). GTP-binding positions include 388-395 (GYPNVGKS) and 432-435 (DCPG). The interval 621 to 653 (APSAGSVVGKPWKKHGNRNKKEKVRRITKHLEN) is disordered. The span at 631–653 (PWKKHGNRNKKEKVRRITKHLEN) shows a compositional bias: basic residues.

It belongs to the TRAFAC class YlqF/YawG GTPase family. LSG1 subfamily.

It localises to the cytoplasm. The protein resides in the endoplasmic reticulum. The protein localises to the nucleus. Its subcellular location is the cajal body. It catalyses the reaction GTP + H2O = GDP + phosphate + H(+). Its function is as follows. GTPase required for the XPO1/CRM1-mediated nuclear export of the 60S ribosomal subunit. Probably acts by mediating the release of NMD3 from the 60S ribosomal subunit after export into the cytoplasm. Functionally, functions as a GTPase. May act by mediating the release of NMD3 from the 60S ribosomal subunit after export into the cytoplasm during the 60S ribosomal subunit maturation. The polypeptide is Large subunit GTPase 1 homolog (Gallus gallus (Chicken)).